We begin with the raw amino-acid sequence, 152 residues long: Methylglyoxal synthase (152 aa).

The region spanning 6–152 is the MGS-like domain; sequence RTLATEKNIA…YEGYLKERLK (147 aa). Substrate-binding positions include H19, K23, 45 to 48, and 65 to 66; these read TGTT and SG. Catalysis depends on D71, which acts as the Proton donor/acceptor. A substrate-binding site is contributed by H98.

It belongs to the methylglyoxal synthase family.

It carries out the reaction dihydroxyacetone phosphate = methylglyoxal + phosphate. Functionally, catalyzes the formation of methylglyoxal from dihydroxyacetone phosphate. The polypeptide is Methylglyoxal synthase (Proteus mirabilis (strain HI4320)).